A 131-amino-acid chain; its full sequence is Snaclec A8 (131 aa).

3 disulfides stabilise this stretch: C2-C13, C30-C129, and C104-C121. One can recognise a C-type lectin domain in the interval 9–130 (HEGHCYKVFN…CGQPYRFTCE (122 aa)).

It belongs to the snaclec family. As to quaternary structure, heterodimer; disulfide-linked. As to expression, expressed by the venom gland.

The protein resides in the secreted. Interferes with one step of hemostasis (modulation of platelet aggregation, or coagulation cascade, for example). This chain is Snaclec A8, found in Macrovipera lebetinus (Levantine viper).